The sequence spans 185 residues: Elongation factor P (185 aa).

Belongs to the elongation factor P family.

The protein resides in the cytoplasm. The protein operates within protein biosynthesis; polypeptide chain elongation. Involved in peptide bond synthesis. Stimulates efficient translation and peptide-bond synthesis on native or reconstituted 70S ribosomes in vitro. Probably functions indirectly by altering the affinity of the ribosome for aminoacyl-tRNA, thus increasing their reactivity as acceptors for peptidyl transferase. The polypeptide is Elongation factor P (Bacillus velezensis (strain DSM 23117 / BGSC 10A6 / LMG 26770 / FZB42) (Bacillus amyloliquefaciens subsp. plantarum)).